Reading from the N-terminus, the 104-residue chain is Iron-sulfur cluster assembly protein CyaY (104 aa).

This sequence belongs to the frataxin family.

In terms of biological role, involved in iron-sulfur (Fe-S) cluster assembly. May act as a regulator of Fe-S biogenesis. The chain is Iron-sulfur cluster assembly protein CyaY from Tolumonas auensis (strain DSM 9187 / NBRC 110442 / TA 4).